The following is a 437-amino-acid chain: Protein disulfide-isomerase tmx3a (437 aa).

The signal sequence occupies residues 1–21 (MANMRNIILTALLSAIALVSG). The Thioredoxin domain occupies 22 to 126 (YVEGLDDKFT…IIEFTNRVSG (105 aa)). Residues 22–368 (YVEGLDDKFT…KNTVMSMVET (347 aa)) lie on the Extracellular side of the membrane. Residues Cys48 and Cys51 each act as nucleophile in the active site. Cys48 and Cys51 form a disulfide bridge. N-linked (GlcNAc...) asparagine glycosylation is present at Asn308. Residues 369-389 (APVFSCFVLGLPVGVVVLVIY) form a helical membrane-spanning segment. Residues 390-437 (ATCTAVPADDEKPEEEATASPALDTHGKKAIESQPESTEKTSEAKKED) are Cytoplasmic-facing. The interval 398-437 (DDEKPEEEATASPALDTHGKKAIESQPESTEKTSEAKKED) is disordered. A compositionally biased stretch (basic and acidic residues) spans 414-437 (THGKKAIESQPESTEKTSEAKKED). The short motif at 434 to 437 (KKED) is the Di-lysine motif element.

The protein localises to the endoplasmic reticulum membrane. The catalysed reaction is Catalyzes the rearrangement of -S-S- bonds in proteins.. Probable disulfide isomerase, which participates in the folding of proteins containing disulfide bonds. May act as a dithiol oxidase. Acts as a regulator of endoplasmic reticulum-mitochondria contact sites via its ability to regulate redox signals. The polypeptide is Protein disulfide-isomerase tmx3a (tmx3a) (Danio rerio (Zebrafish)).